Consider the following 204-residue polypeptide: Thiamine-phosphate synthase (204 aa).

4-amino-2-methyl-5-(diphosphooxymethyl)pyrimidine contacts are provided by residues 32-36 (QLRMK) and Asp64. Residues Asp65 and Asp84 each coordinate Mg(2+). 4-amino-2-methyl-5-(diphosphooxymethyl)pyrimidine is bound at residue Thr103. A 2-[(2R,5Z)-2-carboxy-4-methylthiazol-5(2H)-ylidene]ethyl phosphate-binding site is contributed by 129–131 (TTT). Lys132 is a 4-amino-2-methyl-5-(diphosphooxymethyl)pyrimidine binding site. 2-[(2R,5Z)-2-carboxy-4-methylthiazol-5(2H)-ylidene]ethyl phosphate is bound at residue Gly165.

The protein belongs to the thiamine-phosphate synthase family. Mg(2+) is required as a cofactor.

The catalysed reaction is 2-[(2R,5Z)-2-carboxy-4-methylthiazol-5(2H)-ylidene]ethyl phosphate + 4-amino-2-methyl-5-(diphosphooxymethyl)pyrimidine + 2 H(+) = thiamine phosphate + CO2 + diphosphate. It catalyses the reaction 2-(2-carboxy-4-methylthiazol-5-yl)ethyl phosphate + 4-amino-2-methyl-5-(diphosphooxymethyl)pyrimidine + 2 H(+) = thiamine phosphate + CO2 + diphosphate. It carries out the reaction 4-methyl-5-(2-phosphooxyethyl)-thiazole + 4-amino-2-methyl-5-(diphosphooxymethyl)pyrimidine + H(+) = thiamine phosphate + diphosphate. The protein operates within cofactor biosynthesis; thiamine diphosphate biosynthesis; thiamine phosphate from 4-amino-2-methyl-5-diphosphomethylpyrimidine and 4-methyl-5-(2-phosphoethyl)-thiazole: step 1/1. In terms of biological role, condenses 4-methyl-5-(beta-hydroxyethyl)thiazole monophosphate (THZ-P) and 2-methyl-4-amino-5-hydroxymethyl pyrimidine pyrophosphate (HMP-PP) to form thiamine monophosphate (TMP). The protein is Thiamine-phosphate synthase of Bacteroides fragilis (strain YCH46).